The chain runs to 455 residues: UDP-N-acetylmuramoylalanine--D-glutamate ligase (455 aa).

118–124 lines the ATP pocket; it reads GTNGKST.

This sequence belongs to the MurCDEF family.

It localises to the cytoplasm. It catalyses the reaction UDP-N-acetyl-alpha-D-muramoyl-L-alanine + D-glutamate + ATP = UDP-N-acetyl-alpha-D-muramoyl-L-alanyl-D-glutamate + ADP + phosphate + H(+). It participates in cell wall biogenesis; peptidoglycan biosynthesis. In terms of biological role, cell wall formation. Catalyzes the addition of glutamate to the nucleotide precursor UDP-N-acetylmuramoyl-L-alanine (UMA). The polypeptide is UDP-N-acetylmuramoylalanine--D-glutamate ligase (Myxococcus xanthus (strain DK1622)).